Here is a 231-residue protein sequence, read N- to C-terminus: uncharacterized protein (231 aa).

A helical transmembrane segment spans residues 86 to 106 (LIILFVIGLIITIIGLLMYEP).

It is found in the membrane. This is an uncharacterized protein from Methanocaldococcus jannaschii (strain ATCC 43067 / DSM 2661 / JAL-1 / JCM 10045 / NBRC 100440) (Methanococcus jannaschii).